Here is a 111-residue protein sequence, read N- to C-terminus: Ribonuclease P protein component (111 aa).

It belongs to the RnpA family. Consists of a catalytic RNA component (M1 or rnpB) and a protein subunit.

It catalyses the reaction Endonucleolytic cleavage of RNA, removing 5'-extranucleotides from tRNA precursor.. Its function is as follows. RNaseP catalyzes the removal of the 5'-leader sequence from pre-tRNA to produce the mature 5'-terminus. It can also cleave other RNA substrates such as 4.5S RNA. The protein component plays an auxiliary but essential role in vivo by binding to the 5'-leader sequence and broadening the substrate specificity of the ribozyme. This chain is Ribonuclease P protein component, found in Borreliella afzelii (strain PKo) (Borrelia afzelii).